Here is a 273-residue protein sequence, read N- to C-terminus: Homeobox protein HMX2 (273 aa).

The segment at 1–152 (MGSKEDAGKG…RQAGAAKKKT (152 aa)) is disordered. Residues 93 to 102 (KGSGGSGPGG) are compositionally biased toward gly residues. Over residues 114-123 (SDFKEEKERL) the composition is skewed to basic and acidic residues. Residues 149-208 (KKKTRTVFSRSQVYQLESTFDMKRYLSSSERACLASSLQLTETQVKTWFQNRRNKWKRQL) constitute a DNA-binding region (homeobox).

The protein belongs to the HMX homeobox family.

The protein localises to the nucleus. Functionally, transcription factor involved in specification of neuronal cell types and which is required for inner ear and hypothalamus development. This is Homeobox protein HMX2 (HMX2) from Homo sapiens (Human).